The sequence spans 335 residues: Prepilin leader peptidase/N-methyltransferase (335 aa).

The chain crosses the membrane as a helical span at residues 13-33 (LFAVFLFVLGLCVGSFLNVVI). Zn(2+)-binding residues include Cys-49, Cys-52, Cys-74, and Cys-77. 5 helical membrane-spanning segments follow: residues 105 to 125 (WTYE…LAFI), 131 to 151 (ILPL…AFPL), 206 to 226 (LLGV…LMLL), 258 to 278 (PGLP…VQPI), and 299 to 319 (IPFG…GPWL).

It belongs to the peptidase A24 family. Zn(2+) serves as cofactor.

Its subcellular location is the cell inner membrane. The catalysed reaction is Typically cleaves a -Gly-|-Phe- bond to release an N-terminal, basic peptide of 5-8 residues from type IV prepilin, and then N-methylates the new N-terminal amino group, the methyl donor being S-adenosyl-L-methionine.. Plays an essential role in type IV pili and type II pseudopili formation by proteolytically removing the leader sequence from substrate proteins and subsequently monomethylating the alpha-amino group of the newly exposed N-terminal phenylalanine. The chain is Prepilin leader peptidase/N-methyltransferase (pilD) from Myxococcus xanthus (strain DK1622).